The chain runs to 630 residues: UvrABC system protein C (630 aa).

The GIY-YIG domain occupies 18-97; it reads TQSGVYLMKN…IKKHRPKYNI (80 aa). Positions 207-242 constitute a UVR domain; the sequence is KKVIKSMTEKMMGAADEEKFEVAARLRDSIEAIKAI.

This sequence belongs to the UvrC family. As to quaternary structure, interacts with UvrB in an incision complex.

The protein resides in the cytoplasm. In terms of biological role, the UvrABC repair system catalyzes the recognition and processing of DNA lesions. UvrC both incises the 5' and 3' sides of the lesion. The N-terminal half is responsible for the 3' incision and the C-terminal half is responsible for the 5' incision. The protein is UvrABC system protein C of Bdellovibrio bacteriovorus (strain ATCC 15356 / DSM 50701 / NCIMB 9529 / HD100).